We begin with the raw amino-acid sequence, 2073 residues long: MAEVRKFTKRLSKPGTAAELRQSVSEAVRGSVVLEKAKLVEPLDYENVITQRKTQIYSDPLRDLLMFPMEDISISVIGRQRRTVQSTVPEDAEKRAQSLFVKECIKTYSTDWHVVNYKYEDFSGDFRMLPCKSLRPEKIPNHVFEIDEDCEKDEDSSSLCSQKGGVIKQGWLHKANVNSTITVTMKVFKRRYFYLTQLPDGSYILNSYKDEKNSKESKGCIYLDACIDVVQCPKMRRHAFELKMLDKYSHYLAAETEQEMEEWLIMLKKIIQINTDSLVQEKKDTVEAIQEEETSSQGKAENIMASLERSMHPELMKYGRETEQLNKLSRGDGRQNLFSFDSEVQRLDFSGIEPDVKPFEEKCNKRFMVNCHDLTFNILGHIGDNAKGPPTNVEPFFINLALFDVKNNCKISADFHVDLNPPSVREMLWGTSTQLSNDGNAKGFSPESLIHGIAESQLCYIKQGIFSVTNPHPEIFLVVRIEKVLQGNITHCAEPYIKNSDPIKTAQKVHRTAKQVCSRLGQYRMPFAWAARPIFKDVQGSLDLDGRFSPLYKQDSSKLSNEDILKLLSEYKKPEKTKLQIIPGQLSITVECVPVDLPNCITSSYVPLKPFEKNCQNITVEVEEFVPEMTKYCYPFTIYKNHLYVYPLQLKYDSQKSFAKARNIAVCVEFRDSDESDASALKCIYGKPAGSVFTTNAYAVVSHHNQNPEFYDEIKIELPIHLHQKHHLLFTFYHVSCEINTKGTTKKQDTVETPVGFAWVPLLKDGRVITLEQQLPVSANLPPGYLNVNDAESRRQSNADIKWVDGAKPLLKIKTHLESTIYTQDLHVHKFFHHCQLIQSGSKEVPGELIKYLKCLHAMEIQVMIQFLPVILMQLFRVLTNMTHEDDVPINCTMVLLHIVSKCHEEGLESYLRSFIKYSFRPEKPSTLQAQLIHETLATTMIAILKQSADFLAINKLLKYSWFFFEIIAKSMATYLLEENKIKLPRGQRFPEAYHHVLHSLLLAIIPHVTIRYAEIPDESRNGNYSLASFLKRCLTLMDRGFVFNLINDYISGFSPKDPKVLAEYKFEFLQTICNHEHYIPLNLPMAFAKPKLQRVQDSNLEYSLSDEYCKHHFLVGLLLRETSIALQDNYEIRYTAISVIKNLLIKHAFDTRYQHKNQQAKIAQLYLPFVGLLLENIQRLAGRDTLYSCAAMPSSASRDEFPCGFVSPTNRGSLASDKDTAYGSFQNGHGIKREDSRGSLIPEGATGFPDPGSTSENTRQSSSRSSVSQYNRLDQYEIRNLLMCYLYIVKMISEDTLLTYWNKVSPQELINILVLLEVCLFHFRYMGKRNIARVHDAWLSKHFGIDRKSQTMPALRNRSGVMQARLQHLSSLESSFTLNHSSATTEADIFHQALLEGNTATEVSLTVLDTISFFTQCFKNQLLNNDGHNPLMKKVFDIHLAFLKNGQSEVSLKHVFASLRSFISKFPSAFFKGRVNMCAAFCYEVLKCCTSKISSTRNEASALLYLLMRNNFEYTKRKTFLRTHLQIIIAVSQLIADVALSGGSRFQESLFIINNFANSDRPMKATAFPTEVKDLTKRIRTVLMATAQMKEHEKDPEMLIDLQYSLAKSYASTPELRKTWLDSMAKIHIKNGDFSEAAMCYVHVAALVAEFLHRKKLFPSGCSAFKKITPNIDEEGAMKEDAGMMDVHYSEEVLLELLEQCVDGLWKAERYEVISEISKLIIPIYEKRREFEKLTQVYRTLHGAYTKILEVMHTKKRLLGTFFRVAFYGQSFFEEEDGKEYIYKEPKLTGLSEISLRLVKLYGEKFGTENVKIIQDSDKVNAKELDPKFAHIQVTYVKPYFDDKELTERKTEFERNHNINRFVFEAPYTLSGKKQGCIEEQCKRRTILTTSNSFPYVKKRIPINCEQQVNLKPIDVATDEIKDKTAELHKLCSSVDVDMIQLQLKLQGCVSVQVNAGPLAYARAFLNESQANKYPPKKVNELKDMFRKFIQACSIALELNERLIKEDQIEYHEGLKSNFRDMVKELSDIIHEQILQEDTMHSPWMNNTLHVFCAISGTSSNRGYGSPRYAEV.

Position 12 is a phosphoserine (serine 12). Position 16 is a phosphothreonine (threonine 16). 2 positions are modified to phosphoserine: serine 23 and serine 161. Residues 165-272 form the PH domain; it reads GVIKQGWLHK…WLIMLKKIIQ (108 aa). A Phosphotyrosine modification is found at tyrosine 248. A phosphoserine mark is found at serine 306 and serine 445. Residues 640–818 enclose the C2 DOCK-type domain; that stretch reads KNHLYVYPLQ…PLLKIKTHLE (179 aa). Positions 1227-1267 are disordered; sequence QNGHGIKREDSRGSLIPEGATGFPDPGSTSENTRQSSSRSS. Residues serine 1237 and serine 1240 each carry the phosphoserine modification. Residues 1254–1267 are compositionally biased toward low complexity; sequence STSENTRQSSSRSS. One can recognise a DOCKER domain in the interval 1609–2036; the sequence is KSYASTPELR…LSDIIHEQIL (428 aa).

This sequence belongs to the DOCK family. As to quaternary structure, interacts with CDC42. In terms of tissue distribution, expressed in spleen, thymus, mesenteric lymph nodes (MLN), bone marrow and peripheral blood lymphocytes. Enriched in B-cells from germinal centers. Expressed in B-, T- and dendritic cells as well as Purkinje cells.

Its function is as follows. Guanine nucleotide-exchange factor (GEF) that activates CDC42 by exchanging bound GDP for free GTP. Required for marginal zone (MZ) B-cell development, is associated with early bone marrow B-cell development, MZ B-cell formation, MZ B-cell number and marginal metallophilic macrophages morphology. Facilitates filopodia formation through the activation of CDC42. In Mus musculus (Mouse), this protein is Dedicator of cytokinesis protein 11.